Here is a 400-residue protein sequence, read N- to C-terminus: Acetate kinase (400 aa).

Mg(2+) is bound at residue N9. Position 16 (K16) interacts with ATP. Position 90 (R90) interacts with substrate. D147 functions as the Proton donor/acceptor in the catalytic mechanism. Residues 207–211 (HIGNG), 282–284 (DLR), and 330–334 (GIGEN) each bind ATP. Position 385 (E385) interacts with Mg(2+).

The protein belongs to the acetokinase family. In terms of assembly, homodimer. Mg(2+) is required as a cofactor. Mn(2+) serves as cofactor.

It is found in the cytoplasm. The catalysed reaction is acetate + ATP = acetyl phosphate + ADP. It functions in the pathway metabolic intermediate biosynthesis; acetyl-CoA biosynthesis; acetyl-CoA from acetate: step 1/2. Its function is as follows. Catalyzes the formation of acetyl phosphate from acetate and ATP. Can also catalyze the reverse reaction. The polypeptide is Acetate kinase (Staphylococcus aureus (strain JH1)).